The chain runs to 428 residues: Adenylosuccinate synthetase (428 aa).

GTP is bound by residues 12–18 (GDEGKGK) and 40–42 (GHT). The active-site Proton acceptor is the aspartate 13. Mg(2+)-binding residues include aspartate 13 and glycine 40. IMP-binding positions include 13–16 (DEGK), 38–41 (NAGH), threonine 129, arginine 143, glutamine 224, threonine 239, and arginine 303. The Proton donor role is filled by histidine 41. Substrate is bound at residue 299–305 (VTTGRIR). Residues arginine 305, 331-333 (KVD), and 410-412 (AYG) contribute to the GTP site.

It belongs to the adenylosuccinate synthetase family. As to quaternary structure, homodimer. Mg(2+) serves as cofactor.

Its subcellular location is the cytoplasm. It carries out the reaction IMP + L-aspartate + GTP = N(6)-(1,2-dicarboxyethyl)-AMP + GDP + phosphate + 2 H(+). It participates in purine metabolism; AMP biosynthesis via de novo pathway; AMP from IMP: step 1/2. Plays an important role in the de novo pathway of purine nucleotide biosynthesis. Catalyzes the first committed step in the biosynthesis of AMP from IMP. The sequence is that of Adenylosuccinate synthetase from Francisella tularensis subsp. holarctica (strain FTNF002-00 / FTA).